A 197-amino-acid polypeptide reads, in one-letter code: Phosphoheptose isomerase (197 aa).

The SIS domain occupies 36–197 (MVNALLNEGK…IDSQLFGSEE (162 aa)). Residue 51–53 (NGG) participates in substrate binding. Residues His-60 and Glu-64 each coordinate Zn(2+). Residues Glu-64, 93-94 (ND), 119-121 (STS), Ser-124, and Gln-174 each bind substrate. Gln-174 and His-182 together coordinate Zn(2+).

It belongs to the SIS family. GmhA subfamily. In terms of assembly, homotetramer. Requires Zn(2+) as cofactor.

The protein localises to the cytoplasm. It catalyses the reaction 2 D-sedoheptulose 7-phosphate = D-glycero-alpha-D-manno-heptose 7-phosphate + D-glycero-beta-D-manno-heptose 7-phosphate. Its pathway is carbohydrate biosynthesis; D-glycero-D-manno-heptose 7-phosphate biosynthesis; D-glycero-alpha-D-manno-heptose 7-phosphate and D-glycero-beta-D-manno-heptose 7-phosphate from sedoheptulose 7-phosphate: step 1/1. In terms of biological role, catalyzes the isomerization of sedoheptulose 7-phosphate in D-glycero-D-manno-heptose 7-phosphate. The chain is Phosphoheptose isomerase from Pseudomonas fluorescens (strain SBW25).